Reading from the N-terminus, the 241-residue chain is NH(3)-dependent NAD(+) synthetase (241 aa).

Gly-29 to Ser-36 is a binding site for ATP. Mg(2+) is bound at residue Asp-35. Position 110 (Arg-110) interacts with deamido-NAD(+). Glu-135 lines the Mg(2+) pocket. 2 residues coordinate deamido-NAD(+): Lys-143 and Asp-150. 2 residues coordinate ATP: Lys-159 and Ser-181. Position 226-227 (His-226–Lys-227) interacts with deamido-NAD(+).

The protein belongs to the NAD synthetase family. In terms of assembly, homodimer.

The enzyme catalyses deamido-NAD(+) + NH4(+) + ATP = AMP + diphosphate + NAD(+) + H(+). Its pathway is cofactor biosynthesis; NAD(+) biosynthesis; NAD(+) from deamido-NAD(+) (ammonia route): step 1/1. Functionally, catalyzes the ATP-dependent amidation of deamido-NAD to form NAD. Uses ammonia as a nitrogen source. The sequence is that of NH(3)-dependent NAD(+) synthetase from Finegoldia magna (strain ATCC 29328 / DSM 20472 / WAL 2508) (Peptostreptococcus magnus).